We begin with the raw amino-acid sequence, 172 residues long: Protein-export protein SecB (172 aa).

The protein belongs to the SecB family. In terms of assembly, homotetramer, a dimer of dimers. One homotetramer interacts with 1 SecA dimer.

Its subcellular location is the cytoplasm. Functionally, one of the proteins required for the normal export of preproteins out of the cell cytoplasm. It is a molecular chaperone that binds to a subset of precursor proteins, maintaining them in a translocation-competent state. It also specifically binds to its receptor SecA. In Haemophilus ducreyi (strain 35000HP / ATCC 700724), this protein is Protein-export protein SecB.